A 554-amino-acid polypeptide reads, in one-letter code: Valerianol synthase TPS1F (554 aa).

Aspartate 307 and aspartate 311 together coordinate Mg(2+). The DDXXD motif motif lies at 326 to 330; sequence VQRWD. Mg(2+) is bound by residues aspartate 452, serine 456, and glutamate 460.

Belongs to the terpene synthase family. Requires Mg(2+) as cofactor.

The enzyme catalyses (2E,6E)-farnesyl diphosphate + H2O = valerianol + diphosphate. The protein operates within secondary metabolite biosynthesis; terpenoid biosynthesis. In terms of biological role, terpene synthase that catalyzes the biosynthesis of the terpene valerianol, which is a volatile compound of floral scent. The sequence is that of Valerianol synthase TPS1F from Camellia hiemalis (Camellia).